We begin with the raw amino-acid sequence, 175 residues long: Large ribosomal subunit protein uL6 (175 aa).

The protein belongs to the universal ribosomal protein uL6 family. As to quaternary structure, part of the 50S ribosomal subunit.

This protein binds to the 23S rRNA, and is important in its secondary structure. It is located near the subunit interface in the base of the L7/L12 stalk, and near the tRNA binding site of the peptidyltransferase center. The sequence is that of Large ribosomal subunit protein uL6 from Xanthomonas axonopodis pv. citri (strain 306).